The chain runs to 368 residues: DNA integrity scanning protein DisA (368 aa).

The DAC domain maps to 15–153 (DERLRATLAA…DGRRHVLDEP (139 aa)). Residues G82, L100, and 113–117 (TRHRS) each bind ATP. Positions 101-121 (QPDPSIPTNESGTRHRSAERT) are disordered. Basic and acidic residues predominate over residues 112–121 (GTRHRSAERT).

It belongs to the DisA family. Homooctamer. Mg(2+) serves as cofactor.

It carries out the reaction 2 ATP = 3',3'-c-di-AMP + 2 diphosphate. Participates in a DNA-damage check-point. DisA forms globular foci that rapidly scan along the chromosomes searching for lesions. Functionally, also has diadenylate cyclase activity, catalyzing the condensation of 2 ATP molecules into cyclic di-AMP (c-di-AMP). c-di-AMP likely acts as a signaling molecule that may couple DNA integrity with a cellular process. This chain is DNA integrity scanning protein DisA, found in Acidothermus cellulolyticus (strain ATCC 43068 / DSM 8971 / 11B).